A 131-amino-acid polypeptide reads, in one-letter code: Small ribosomal subunit protein uS8 (131 aa).

It belongs to the universal ribosomal protein uS8 family. In terms of assembly, part of the 30S ribosomal subunit. Contacts proteins S5 and S12.

One of the primary rRNA binding proteins, it binds directly to 16S rRNA central domain where it helps coordinate assembly of the platform of the 30S subunit. The protein is Small ribosomal subunit protein uS8 of Sulfurimonas denitrificans (strain ATCC 33889 / DSM 1251) (Thiomicrospira denitrificans (strain ATCC 33889 / DSM 1251)).